A 307-amino-acid polypeptide reads, in one-letter code: Probable E3 SUMO-protein ligase RNF212 (307 aa).

The RING-type zinc finger occupies 7-46; sequence CNRCFQSPHRKSSFSLTSCGHVYCHSCLLKGTKNECVICQ. Positions 91–124 form a coiled coil; that stretch reads RRRLVAFYQEKISQLEESLRKSVLQIKQLQSMRS. The disordered stretch occupies residues 164–291; sequence LTPPARKPEM…KMSPFLPSTP (128 aa). Composition is skewed to polar residues over residues 202 to 213, 233 to 252, and 259 to 271; these read LSLTPSHASMTK, SQLS…SSWT, and ISIS…QCAG.

Specifically expressed in meiocytes of the gonads.

The protein resides in the nucleus. The protein localises to the chromosome. Its pathway is protein modification; protein sumoylation. In terms of biological role, SUMO E3 ligase that acts as a regulator of crossing-over during meiosis: required to couple chromosome synapsis to the formation of crossover-specific recombination complexes. Localizes to recombination sites and stabilizes meiosis-specific recombination factors, such as MutS-gamma complex proteins (MSH4 and MSH5) and TEX11. May mediate sumoylation of target proteins MSH4 and/or MSH5, leading to enhance their binding to recombination sites. Acts as a limiting factor for crossover designation and/or reinforcement and plays an antagonist role with CCNB1IP1/HEI10 in the regulation of meiotic recombination. In Mus musculus (Mouse), this protein is Probable E3 SUMO-protein ligase RNF212 (Rnf212).